The sequence spans 108 residues: Probable chaperone-like protein YdbL (108 aa).

An N-terminal signal peptide occupies residues 1 to 21 (MKKTLLLCAFLVGLVSSNVMA).

The protein localises to the periplasm. Functionally, probably acts as a chaperone-like protein that contributes to, but is not required for, the formation of the YdbH-YnbE intermembrane bridge. Affects the function and the structure of the YdbH-YnbE complex. Overexpression of ydbL causes a negative effect on YdbH-YnbE function. The protein is Probable chaperone-like protein YdbL (ydbL) of Escherichia coli (strain K12).